We begin with the raw amino-acid sequence, 931 residues long: Dymeclin (931 aa).

Disordered stretches follow at residues 1-53, 599-618, and 839-931; these read MGVA…SSTT, SPSK…NTNN, and DANN…EKTN. Glycine 2 carries the N-myristoyl glycine lipid modification. Low complexity-rich tracts occupy residues 27 to 49 and 601 to 618; these read NNNK…NNNN and SKIN…NTNN. Residues 839–858 are compositionally biased toward polar residues; the sequence is DANNFTPKKQLSSDQLHSPP. Composition is skewed to low complexity over residues 859-876 and 889-901; these read TNTT…SSNT and QLQQ…NQEQ. Positions 919 to 931 are enriched in polar residues; sequence TTGVELSSTEKTN.

It belongs to the dymeclin family.

This is Dymeclin (dym) from Dictyostelium discoideum (Social amoeba).